The following is a 228-amino-acid chain: Ribonuclease 3 (228 aa).

The RNase III domain occupies 5–128 (LNRLMARLGY…IIGAMLLDGG (124 aa)). Position 41 (E41) interacts with Mg(2+). D45 is a catalytic residue. Mg(2+)-binding residues include D114 and E117. E117 is a catalytic residue. Residues 155 to 225 (DAKTRLQEWL…ASLALEWLEQ (71 aa)) form the DRBM domain.

This sequence belongs to the ribonuclease III family. As to quaternary structure, homodimer. It depends on Mg(2+) as a cofactor.

Its subcellular location is the cytoplasm. The enzyme catalyses Endonucleolytic cleavage to 5'-phosphomonoester.. In terms of biological role, digests double-stranded RNA. Involved in the processing of primary rRNA transcript to yield the immediate precursors to the large and small rRNAs (23S and 16S). Processes some mRNAs, and tRNAs when they are encoded in the rRNA operon. Processes pre-crRNA and tracrRNA of type II CRISPR loci if present in the organism. The polypeptide is Ribonuclease 3 (Alcanivorax borkumensis (strain ATCC 700651 / DSM 11573 / NCIMB 13689 / SK2)).